A 1037-amino-acid chain; its full sequence is Tyrosine-protein kinase-like otk (1037 aa).

An N-terminal signal peptide occupies residues 1–22 (MAALRISVWILVQALMMALVSS). N-linked (GlcNAc...) asparagine glycans are attached at residues Asn-23 and Asn-39. The Extracellular segment spans residues 23–582 (NSSHFLQLPQ…GGDGFLVTRA (560 aa)). Ig-like C2-type domains are found at residues 25 to 115 (SHFL…AKLS), 114 to 200 (LSVI…RVMS), 252 to 366 (PEDL…APIN), 369 to 464 (PGTL…VAIN), and 469 to 559 (PKFS…VQLV). Intrachain disulfides connect Cys-46/Cys-96, Cys-138/Cys-189, Cys-277/Cys-355, and Cys-400/Cys-448. 7 N-linked (GlcNAc...) asparagine glycosylation sites follow: Asn-337, Asn-418, Asn-430, Asn-445, Asn-458, Asn-513, and Asn-525. Cys-491 and Cys-543 form a disulfide bridge. Residues 583–603 (VLITMTVALAYIVLVVGLMLW) traverse the membrane as a helical segment. Residues 604-1037 (CRYRRQARKA…LSKAMQSLEK (434 aa)) lie on the Cytoplasmic side of the membrane. Disordered stretches follow at residues 618–681 (LSTK…KKSA) and 719–764 (ATGS…KTSM). Residues 653–675 (QSRSKSNGDAQKSDDTACSQQSR) are compositionally biased toward polar residues. Ser-680 carries the post-translational modification Phosphoserine. In terms of domain architecture, Protein kinase; inactive spans 694–1035 (LTELIQIGRG…AALSKAMQSL (342 aa)). Over residues 724–735 (SDKDADTEKQHS) the composition is skewed to basic and acidic residues.

It belongs to the protein kinase superfamily. Tyr protein kinase family. Insulin receptor subfamily. In terms of assembly, interacts with plexA; component of a receptor complex that mediates the repulsive signaling in response to Semaphorin ligands.

Its subcellular location is the cell membrane. Its function is as follows. Acts as a calcium-dependent, homophilic cell adhesion molecule that regulates neural recognition during the development of the nervous system. Component of the repulsive Plexin signaling response to regulate motor axon guidance at the embryonic stage. Also component of a receptor complex that is required in the adult visual system to innervate the lamina layer; specific targeting of R1-R6 axons. This Drosophila ananassae (Fruit fly) protein is Tyrosine-protein kinase-like otk.